Here is a 126-residue protein sequence, read N- to C-terminus: Chemocyanin (126 aa).

The N-terminal stretch at 1-30 (MAQGSGSAERALVLGVVLVFLVFNCEVAES) is a signal peptide. Residues 31–126 (VVYTVGDGGG…GGLKIAVTAA (96 aa)) enclose the Phytocyanin domain. The Cu cation site is built by His-69, Cys-109, and His-114. Residues Cys-82 and Cys-115 are joined by a disulfide bond.

As to expression, strongly expressed in stigma and style and to a lesser extent in leaves, ovary and petals. Not detected in pollen tubes, mature anthers or roots.

Its function is as follows. Diffusible chemotropic factor that induces pollen tube chemotropism. The protein is Chemocyanin of Lilium longiflorum (Trumpet lily).